The chain runs to 465 residues: UDP-N-acetylmuramate--L-alanine ligase (465 aa).

112–118 contacts ATP; sequence GTHGKTT.

Belongs to the MurCDEF family.

It localises to the cytoplasm. The catalysed reaction is UDP-N-acetyl-alpha-D-muramate + L-alanine + ATP = UDP-N-acetyl-alpha-D-muramoyl-L-alanine + ADP + phosphate + H(+). Its pathway is cell wall biogenesis; peptidoglycan biosynthesis. Its function is as follows. Cell wall formation. The sequence is that of UDP-N-acetylmuramate--L-alanine ligase from Burkholderia lata (strain ATCC 17760 / DSM 23089 / LMG 22485 / NCIMB 9086 / R18194 / 383).